Consider the following 231-residue polypeptide: Inner membrane protein YohK (231 aa).

Position 1 (Met1) is a topological domain, periplasmic. The helical transmembrane segment at Met2–Leu22 threads the bilayer. The Cytoplasmic portion of the chain corresponds to Ala23–Pro29. A helical transmembrane segment spans residues Leu30–Ile50. The Periplasmic portion of the chain corresponds to Ser51 to Ser90. A helical membrane pass occupies residues Ile91–Leu111. The Cytoplasmic portion of the chain corresponds to Leu112–Glu118. 2 helical membrane passes run Ile119–Ser139 and Ile140–Val160. Topologically, residues Phe161–Leu208 are cytoplasmic. A helical membrane pass occupies residues Val209 to Val229. Residues Met230–Gly231 are Periplasmic-facing.

It belongs to the YohK (E.coli)/YwbG (IPA-22R) (B.subtilis) family.

The protein resides in the cell inner membrane. In Escherichia coli (strain K12), this protein is Inner membrane protein YohK (yohK).